Consider the following 512-residue polypeptide: 2-isopropylmalate synthase (512 aa).

A Pyruvate carboxyltransferase domain is found at 5–268 (LIIFDTTLRD…ELGIDTQHIV (264 aa)). Residues aspartate 14, histidine 202, histidine 204, and asparagine 239 each coordinate Mn(2+). Residues 394-512 (GFVSLSQRSE…SKAERVAAQG (119 aa)) form a regulatory domain region.

The protein belongs to the alpha-IPM synthase/homocitrate synthase family. LeuA type 1 subfamily. In terms of assembly, homodimer. Requires Mn(2+) as cofactor.

The protein resides in the cytoplasm. It carries out the reaction 3-methyl-2-oxobutanoate + acetyl-CoA + H2O = (2S)-2-isopropylmalate + CoA + H(+). The protein operates within amino-acid biosynthesis; L-leucine biosynthesis; L-leucine from 3-methyl-2-oxobutanoate: step 1/4. Catalyzes the condensation of the acetyl group of acetyl-CoA with 3-methyl-2-oxobutanoate (2-ketoisovalerate) to form 3-carboxy-3-hydroxy-4-methylpentanoate (2-isopropylmalate). The chain is 2-isopropylmalate synthase from Paracidovorax citrulli (strain AAC00-1) (Acidovorax citrulli).